Consider the following 89-residue polypeptide: Small ribosomal subunit protein uS14 (89 aa).

The protein belongs to the universal ribosomal protein uS14 family. As to quaternary structure, part of the 30S ribosomal subunit. Contacts proteins S3 and S10.

Its function is as follows. Binds 16S rRNA, required for the assembly of 30S particles and may also be responsible for determining the conformation of the 16S rRNA at the A site. This Chlorobaculum parvum (strain DSM 263 / NCIMB 8327) (Chlorobium vibrioforme subsp. thiosulfatophilum) protein is Small ribosomal subunit protein uS14.